The primary structure comprises 523 residues: GMP synthase [glutamine-hydrolyzing] (523 aa).

In terms of domain architecture, Glutamine amidotransferase type-1 spans 8 to 205 (KILILDFGSQ…VVNICGCETK (198 aa)). Catalysis depends on cysteine 85, which acts as the Nucleophile. Catalysis depends on residues histidine 179 and glutamate 181. Positions 206-398 (WTAENIIEDA…LGLPAEMLNR (193 aa)) constitute a GMPS ATP-PPase domain. 233–239 (SGGVDSS) contacts ATP.

In terms of assembly, homodimer.

It carries out the reaction XMP + L-glutamine + ATP + H2O = GMP + L-glutamate + AMP + diphosphate + 2 H(+). Its pathway is purine metabolism; GMP biosynthesis; GMP from XMP (L-Gln route): step 1/1. Functionally, catalyzes the synthesis of GMP from XMP. The protein is GMP synthase [glutamine-hydrolyzing] of Glaesserella parasuis serovar 5 (strain SH0165) (Haemophilus parasuis).